The sequence spans 989 residues: DNA-binding protein SMUBP-2 (989 aa).

Ala-2 carries the post-translational modification N-acetylalanine. ATP contacts are provided by residues 213–220 (GPPGTGKT), Gln-402, Tyr-441, and Glu-570. Residues 637–783 (TAFEYLDDIV…KARHITVSRK (147 aa)) are SS DNA-binding. Disordered regions lie at residues 650-717 (YTHE…GCDR), 765-818 (LRHD…GQPH), and 833-869 (LQRQQGSQAQPAKAQPGVGLHPQKTQQKKKKKETKGP). The span at 677-690 (EQENGQEARAAAGQ) shows a compositional bias: low complexity. Positions 721 to 784 (IDRTEHFRAM…ARHITVSRKS (64 aa)) constitute an R3H domain. Residues 765–775 (LRHDSTGEGKA) show a composition bias toward basic and acidic residues. Residues Ser-797 and Ser-800 each carry the phosphoserine modification. The segment covering 833–842 (LQRQQGSQAQ) has biased composition (low complexity). The short motif at 860–864 (KKKKK) is the Nuclear localization signal element. An AN1-type zinc finger spans residues 885 to 934 (IKADNTCSFAKCTASTTTLGQFCMHCSRRYCLSHHLPEIHGCGEKARAHA). Zn(2+)-binding residues include Cys-891, Cys-896, Cys-907, Cys-910, Cys-915, His-918, His-924, and Cys-926. Residues 954-972 (ALDPAKRAQLQRRLDKKLG) are compositionally biased toward basic and acidic residues. The segment at 954 to 989 (ALDPAKRAQLQRRLDKKLGELSSQRTSKRKEKERGT) is disordered.

It belongs to the DNA2/NAM7 helicase family. In terms of assembly, homooligomer. Interacts with RUVBL1. Interacts with RUVBL2. Interacts with GTF3C1. Interacts with ABT1. Interacts with ribosomes. High expression in brain and testis, moderate in heart, spleen, and kidney, and low in other tissues.

The protein localises to the nucleus. The protein resides in the cytoplasm. It localises to the cell projection. It is found in the axon. The catalysed reaction is ATP + H2O = ADP + phosphate + H(+). 5' to 3' helicase that unwinds RNA and DNA duplexes in an ATP-dependent reaction. Specific to 5'-phosphorylated single-stranded guanine-rich sequences. May play a role in RNA metabolism, ribosome biogenesis or initiation of translation. May play a role in regulation of transcription. Interacts with tRNA-Tyr. In Mesocricetus auratus (Golden hamster), this protein is DNA-binding protein SMUBP-2 (IGHMBP2).